Consider the following 142-residue polypeptide: Hemoglobin subunit alpha (142 aa).

The region spanning 2–142 (VLSPADKTNV…VSTVLVSKYR (141 aa)) is the Globin domain. Phosphoserine is present on Ser4. Lys8 is subject to N6-succinyllysine. A Phosphothreonine modification is found at Thr9. Lys12 is subject to N6-succinyllysine. Lys17 is modified (N6-acetyllysine; alternate). The residue at position 17 (Lys17) is an N6-succinyllysine; alternate. Tyr25 bears the Phosphotyrosine mark. A Phosphoserine modification is found at Ser36. Position 41 is an N6-succinyllysine (Lys41). At Ser50 the chain carries Phosphoserine. His59 provides a ligand contact to O2. Residue His88 participates in heme b binding. A Phosphoserine modification is found at Ser103. Thr109 carries the post-translational modification Phosphothreonine. Phosphoserine occurs at positions 125 and 132. Thr135 carries the phosphothreonine modification. Ser139 is modified (phosphoserine).

It belongs to the globin family. Heterotetramer of two alpha chains and two beta chains. As to expression, red blood cells.

Functionally, involved in oxygen transport from the lung to the various peripheral tissues. Its function is as follows. Hemopressin acts as an antagonist peptide of the cannabinoid receptor CNR1. Hemopressin-binding efficiently blocks cannabinoid receptor CNR1 and subsequent signaling. The protein is Hemoglobin subunit alpha (HBA) of Antrozous pallidus (Pallid bat).